The following is a 187-amino-acid chain: Elongation factor P (187 aa).

This sequence belongs to the elongation factor P family.

The protein localises to the cytoplasm. The protein operates within protein biosynthesis; polypeptide chain elongation. In terms of biological role, involved in peptide bond synthesis. Stimulates efficient translation and peptide-bond synthesis on native or reconstituted 70S ribosomes in vitro. Probably functions indirectly by altering the affinity of the ribosome for aminoacyl-tRNA, thus increasing their reactivity as acceptors for peptidyl transferase. In Desulfotalea psychrophila (strain LSv54 / DSM 12343), this protein is Elongation factor P.